Here is a 301-residue protein sequence, read N- to C-terminus: Ornithine carbamoyltransferase (301 aa).

Residues 47–50 (STRT), Gln74, Arg98, and 125–128 (HPMQ) each bind carbamoyl phosphate. L-ornithine contacts are provided by residues Asn156, Asp220, and 224 to 225 (SM). Residues 260–261 (CL) and Arg288 each bind carbamoyl phosphate.

The protein belongs to the aspartate/ornithine carbamoyltransferase superfamily. OTCase family.

The protein localises to the cytoplasm. It catalyses the reaction carbamoyl phosphate + L-ornithine = L-citrulline + phosphate + H(+). It functions in the pathway amino-acid biosynthesis; L-arginine biosynthesis; L-arginine from L-ornithine and carbamoyl phosphate: step 1/3. In terms of biological role, reversibly catalyzes the transfer of the carbamoyl group from carbamoyl phosphate (CP) to the N(epsilon) atom of ornithine (ORN) to produce L-citrulline. The chain is Ornithine carbamoyltransferase from Picrophilus torridus (strain ATCC 700027 / DSM 9790 / JCM 10055 / NBRC 100828 / KAW 2/3).